Here is a 452-residue protein sequence, read N- to C-terminus: Heat shock protein 83 (452 aa).

Position 124 (Arg-124) interacts with ATP. The short motif at 448 to 452 is the TPR repeat-binding element; the sequence is MEQVD.

Belongs to the heat shock protein 90 family. Homodimer.

Its subcellular location is the cytoplasm. In terms of biological role, molecular chaperone that promotes the maturation, structural maintenance and proper regulation of specific target proteins involved for instance in cell cycle control and signal transduction. Undergoes a functional cycle that is linked to its ATPase activity. This cycle probably induces conformational changes in the client proteins, thereby causing their activation. Interacts dynamically with various co-chaperones that modulate its substrate recognition, ATPase cycle and chaperone function. The protein is Heat shock protein 83 (HSP83) of Leishmania donovani.